The primary structure comprises 457 residues: Bifunctional protein GlmU (457 aa).

A pyrophosphorylase region spans residues 1-228; the sequence is MEGLVTLILA…SEEITGVNSR (228 aa). Residues 9–12, K23, Q73, and 78–79 contribute to the UDP-N-acetyl-alpha-D-glucosamine site; these read LAAG and GT. A Mg(2+)-binding site is contributed by D102. Residues G139, E154, N169, and N226 each coordinate UDP-N-acetyl-alpha-D-glucosamine. N226 serves as a coordination point for Mg(2+). The segment at 229–249 is linker; sequence VQLFEAEKIMRKRINYRHMEN. The N-acetyltransferase stretch occupies residues 250-457; the sequence is GVTIVDPDTT…VQERIKKGRL (208 aa). UDP-N-acetyl-alpha-D-glucosamine contacts are provided by R331 and K349. H361 (proton acceptor) is an active-site residue. Y364 and N375 together coordinate UDP-N-acetyl-alpha-D-glucosamine. Acetyl-CoA contacts are provided by residues 384–385, A421, and R438; that span reads NY.

In the N-terminal section; belongs to the N-acetylglucosamine-1-phosphate uridyltransferase family. This sequence in the C-terminal section; belongs to the transferase hexapeptide repeat family. In terms of assembly, homotrimer. Mg(2+) is required as a cofactor.

The protein localises to the cytoplasm. The enzyme catalyses alpha-D-glucosamine 1-phosphate + acetyl-CoA = N-acetyl-alpha-D-glucosamine 1-phosphate + CoA + H(+). It catalyses the reaction N-acetyl-alpha-D-glucosamine 1-phosphate + UTP + H(+) = UDP-N-acetyl-alpha-D-glucosamine + diphosphate. It functions in the pathway nucleotide-sugar biosynthesis; UDP-N-acetyl-alpha-D-glucosamine biosynthesis; N-acetyl-alpha-D-glucosamine 1-phosphate from alpha-D-glucosamine 6-phosphate (route II): step 2/2. It participates in nucleotide-sugar biosynthesis; UDP-N-acetyl-alpha-D-glucosamine biosynthesis; UDP-N-acetyl-alpha-D-glucosamine from N-acetyl-alpha-D-glucosamine 1-phosphate: step 1/1. Its pathway is bacterial outer membrane biogenesis; LPS lipid A biosynthesis. Functionally, catalyzes the last two sequential reactions in the de novo biosynthetic pathway for UDP-N-acetylglucosamine (UDP-GlcNAc). The C-terminal domain catalyzes the transfer of acetyl group from acetyl coenzyme A to glucosamine-1-phosphate (GlcN-1-P) to produce N-acetylglucosamine-1-phosphate (GlcNAc-1-P), which is converted into UDP-GlcNAc by the transfer of uridine 5-monophosphate (from uridine 5-triphosphate), a reaction catalyzed by the N-terminal domain. In Thermoanaerobacter pseudethanolicus (strain ATCC 33223 / 39E) (Clostridium thermohydrosulfuricum), this protein is Bifunctional protein GlmU.